The following is a 107-amino-acid chain: Late histone H2B.L4 (107 aa).

An O-linked (GlcNAc) serine glycan is attached at S94. K102 is covalently cross-linked (Glycyl lysine isopeptide (Lys-Gly) (interchain with G-Cter in ubiquitin)).

The protein belongs to the histone H2B family. In terms of assembly, the nucleosome is a histone octamer containing two molecules each of H2A, H2B, H3 and H4 assembled in one H3-H4 heterotetramer and two H2A-H2B heterodimers. The octamer wraps approximately 147 bp of DNA. Post-translationally, monoubiquitination gives a specific tag for epigenetic transcriptional activation and is also prerequisite for histone H3 'Lys-4' and 'Lys-79' methylation. In terms of processing, glcNAcylation at Ser-94 promotes monoubiquitination of Lys-102. It fluctuates in response to extracellular glucose, and associates with transcribed genes.

Its subcellular location is the nucleus. The protein localises to the chromosome. In terms of biological role, core component of nucleosome. Nucleosomes wrap and compact DNA into chromatin, limiting DNA accessibility to the cellular machineries which require DNA as a template. Histones thereby play a central role in transcription regulation, DNA repair, DNA replication and chromosomal stability. DNA accessibility is regulated via a complex set of post-translational modifications of histones, also called histone code, and nucleosome remodeling. This chain is Late histone H2B.L4, found in Strongylocentrotus purpuratus (Purple sea urchin).